Reading from the N-terminus, the 302-residue chain is tRNA pseudouridine synthase B (302 aa).

Asp42 functions as the Nucleophile in the catalytic mechanism.

The protein belongs to the pseudouridine synthase TruB family. Type 1 subfamily.

The enzyme catalyses uridine(55) in tRNA = pseudouridine(55) in tRNA. Responsible for synthesis of pseudouridine from uracil-55 in the psi GC loop of transfer RNAs. This is tRNA pseudouridine synthase B from Leifsonia xyli subsp. xyli (strain CTCB07).